The chain runs to 83 residues: uncharacterized protein (83 aa).

This is an uncharacterized protein from Vaccinia virus (strain Copenhagen) (VACV).